The chain runs to 495 residues: Ribosomal protein uS12 methylthiotransferase RimO (495 aa).

The 117-residue stretch at 5–121 (RTVALVTLGC…ISDRLQTILN (117 aa)) folds into the MTTase N-terminal domain. [4Fe-4S] cluster-binding residues include Cys14, Cys50, and Cys84. A disordered region spans residues 145–183 (QSAGADVALPGHGAPEGLPEDLPEGLAPESGPRAPLRRR). A Radical SAM core domain is found at 184–415 (LDGSPVASVK…RLAEELVAQR (232 aa)). Positions 198, 202, and 205 each coordinate [4Fe-4S] cluster. Residues 417 to 484 (EERVGETVHV…GVDLVAEPLP (68 aa)) enclose the TRAM domain.

This sequence belongs to the methylthiotransferase family. RimO subfamily. [4Fe-4S] cluster serves as cofactor.

The protein resides in the cytoplasm. It carries out the reaction L-aspartate(89)-[ribosomal protein uS12]-hydrogen + (sulfur carrier)-SH + AH2 + 2 S-adenosyl-L-methionine = 3-methylsulfanyl-L-aspartate(89)-[ribosomal protein uS12]-hydrogen + (sulfur carrier)-H + 5'-deoxyadenosine + L-methionine + A + S-adenosyl-L-homocysteine + 2 H(+). Its function is as follows. Catalyzes the methylthiolation of an aspartic acid residue of ribosomal protein uS12. This is Ribosomal protein uS12 methylthiotransferase RimO from Streptomyces avermitilis (strain ATCC 31267 / DSM 46492 / JCM 5070 / NBRC 14893 / NCIMB 12804 / NRRL 8165 / MA-4680).